A 625-amino-acid chain; its full sequence is Endoglucanase D (625 aa).

Residues 1 to 17 form the signal peptide; sequence SLTGVFPSGLIETKVSA. Aspartate 177 serves as the catalytic Nucleophile. Catalysis depends on residues histidine 492 and aspartate 522. The active-site Proton donor is glutamate 531. The Dockerin domain occupies 555–625; it reads NEVLYGDVND…LIRVIEKLPI (71 aa).

Belongs to the glycosyl hydrolase 9 (cellulase E) family. Ca(2+) is required as a cofactor.

It catalyses the reaction Endohydrolysis of (1-&gt;4)-beta-D-glucosidic linkages in cellulose, lichenin and cereal beta-D-glucans.. Its function is as follows. This enzyme catalyzes the endohydrolysis of 1,4-beta-glucosidic linkages in cellulose, lichenin and cereal beta-D-glucans. The sequence is that of Endoglucanase D (celD) from Acetivibrio thermocellus (Hungateiclostridium thermocellum).